Reading from the N-terminus, the 222-residue chain is Ribose-5-phosphate isomerase A (222 aa).

Substrate contacts are provided by residues 29-32, 82-85, and 95-98; these read TGST, DSAD, and KGGG. Catalysis depends on glutamate 104, which acts as the Proton acceptor. Residue lysine 122 coordinates substrate.

It belongs to the ribose 5-phosphate isomerase family. In terms of assembly, homodimer.

It carries out the reaction aldehydo-D-ribose 5-phosphate = D-ribulose 5-phosphate. Its pathway is carbohydrate degradation; pentose phosphate pathway; D-ribose 5-phosphate from D-ribulose 5-phosphate (non-oxidative stage): step 1/1. In terms of biological role, catalyzes the reversible conversion of ribose-5-phosphate to ribulose 5-phosphate. This Blochmanniella floridana protein is Ribose-5-phosphate isomerase A.